We begin with the raw amino-acid sequence, 311 residues long: Putative dihydroorotate dehydrogenase A (fumarate) (311 aa).

Substrate-binding positions include Lys-45, 69 to 73, and Asn-128; that span reads NSMGL. 45–46 provides a ligand contact to FMN; it reads KT. Asn-128 contacts FMN. Cys-131 functions as the Nucleophile in the catalytic mechanism. 2 residues coordinate FMN: Lys-165 and Val-193. 194 to 195 is a substrate binding site; the sequence is NS. Residues Gly-220, 248 to 249, and 270 to 271 contribute to the FMN site; these read GG and GT.

This sequence belongs to the dihydroorotate dehydrogenase family. Type 1 subfamily. In terms of assembly, homodimer. It depends on FMN as a cofactor.

It is found in the cytoplasm. It carries out the reaction (S)-dihydroorotate + fumarate = orotate + succinate. Its pathway is pyrimidine metabolism; UMP biosynthesis via de novo pathway. Functionally, catalyzes the conversion of dihydroorotate to orotate with fumarate as the electron acceptor. This Streptococcus pyogenes serotype M1 protein is Putative dihydroorotate dehydrogenase A (fumarate) (pyrD).